Here is a 108-residue protein sequence, read N- to C-terminus: Circadian clock oscillator protein KaiB (108 aa).

It belongs to the KaiB family. As to quaternary structure, undergoes a major conformational rearrangment; in the free state forms homotetramers with 2 dimers. When bound to the CI domain of KaiC, KaiA or CikA switches to a monomeric thioredoxin-fold (KaiB(fs)). The KaiABC complex composition changes during the circadian cycle to control KaiC phosphorylation. Complexes KaiC(6), KaiA(2-4):KaiC(6), KaiB(6):KaiC(6) and KaiC(6):KaiB(6):KaiA(12) are among the most important forms, many form cooperatively. Binds to KaiA; 1 KaiB(fs) binds to the KaiA homodimer. Binds to the B-loop in the CI domain of KaiC; SasA and KaiB compete to bind to the CI domain. Binding to KaiC CI domain occurs 1:1. KaiA and CikA bind to the same region of KaiB(fs) and therefore compete.

Key component of the KaiABC oscillator complex, which constitutes the main circadian regulator in cyanobacteria. Its composition changes during the circadian cycle to control KaiC phosphorylation. KaiA stimulates KaiC autophosphorylation, while KaiB sequesters KaiA, leading to KaiC autodephosphorylation. KaiA binding to KaiC yields KaiA(2-4):KaiC(6) complexes which stimulate KaiC autophosphorylation. Phospho-Ser-431 KaiC accumulation triggers binding of KaiB to form the KaiB(6):KaiC(6) complex, leading to changes in the output regulators CikA and SasA. KaiB switches to a thioredoxin-like fold (KaiB(fs)) in complex with KaiC. KaiB(6):KaiC(6) formation exposes a site for KaiA binding that sequesters KaiA from the CII domain, making the KaiC(6):KaiB(6):KaiA(12) complex that results in KaiC autodephosphorylation. Complete dephosphorylation of KaiC leads to dissociation of KaiA(2):KaiB(1), completing 1 cycle of the Kai oscillator. In terms of biological role, a metamorphic protein which reversibly switches between an inactive tetrameric fold and a rare, thioredoxin-like monomeric fold (KaiB(fs)). KaiB(fs) binds phospho-KaiC, KaiA and CikA. KaiA and CikA compete for binding to KaiB(fs), and KaiB(fs) and SasA compete for binding to KaiC, thus the clock oscillator and output signal pathway are tightly coupled. The chain is Circadian clock oscillator protein KaiB from Thermosynechococcus vestitus (strain NIES-2133 / IAM M-273 / BP-1).